We begin with the raw amino-acid sequence, 1152 residues long: Syntaxin-binding protein 5 (1152 aa).

Residues 14 to 35 (TAGSSSASQQQQQQQHPPGNRE) are disordered. Positions 17-28 (SSSASQQQQQQQ) are enriched in low complexity. 10 WD repeats span residues 62-95 (SALA…CYCQ), 102-141 (VIQL…SLKF), 146-182 (VTFC…GYVI), 201-235 (HISD…DYRY), 241-273 (IHSV…PTKP), 295-337 (PILK…KSTA), 345-379 (IVDF…LIDL), 401-478 (TCCE…YKLK), 506-620 (QIIS…ELVI), and 634-696 (TSLA…SGAG). Disordered regions lie at residues 557–596 (TPEG…GLRD) and 675–731 (SNDP…QKVN). Serine 693 bears the Phosphoserine mark. The span at 713–722 (SPTSGSSSPH) shows a compositional bias: low complexity. Serine 724 is subject to Phosphoserine; by PKA. Serine 760 carries the post-translational modification Phosphoserine. Threonine 763 bears the Phosphothreonine mark. Position 783 is a phosphoserine (serine 783). Residue threonine 785 is modified to Phosphothreonine. Serine 786 is subject to Phosphoserine. WD repeat units lie at residues 795-852 (ISAL…SGTI), 861-935 (RMAF…QNCA), 940-984 (ITET…LDVY), and 998-1021 (CFAN…TYSQ). Basic and acidic residues predominate over residues 879–893 (WTEHNVPEEKDEKEK). Positions 879–907 (WTEHNVPEEKDEKEKLKKRRPVSVSPSSS) are disordered. Residues serine 901 and serine 903 each carry the phosphoserine modification. Threonine 1040 carries the post-translational modification Phosphothreonine. Serine 1059 and serine 1132 each carry phosphoserine. The region spanning 1087 to 1147 (GIEGVKGAAS…HEMMLKYKDK (61 aa)) is the v-SNARE coiled-coil homology domain.

It belongs to the WD repeat L(2)GL family. Part of a complex that contains STXBP5, STX4A and SNAP23. Interacts with STX1A and STX4A via its v-SNARE homology domain. Part of a complex that contains STX1, STXBP5, SNAP25 and SYT1. In terms of processing, phosphorylation by PKA reduces interaction with STX1A and enhances synaptic neurotransmitter release. As to expression, isoform 1 is detected in heart, brain, lung, liver, skeletal muscle, kidney and testis. Isoform 2 is detected in brain and in testis. Isoform 3 is detected in testis.

The protein localises to the cytoplasm. It is found in the cell membrane. Its subcellular location is the cytoplasmic vesicle membrane. The protein resides in the synapse. It localises to the cytoplasmic vesicle. The protein localises to the secretory vesicle. It is found in the synaptic vesicle. Functionally, inhibits translocation of GLUT4 from intracellular vesicles to the plasma membrane. Plays a regulatory role in calcium-dependent exocytosis and neurotransmitter release. Inhibits membrane fusion between transport vesicles and the plasma membrane. May modulate the assembly of trans-SNARE complexes between transport vesicles and the plasma membrane. Competes with STXBP1 for STX1 binding. This chain is Syntaxin-binding protein 5 (Stxbp5), found in Rattus norvegicus (Rat).